We begin with the raw amino-acid sequence, 365 residues long: Chaperone protein DnaJ (365 aa).

Residues 4–70 enclose the J domain; that stretch reads DYYKILGVDR…EKRRIYDQTG (67 aa). The segment at 139 to 220 adopts a CR-type zinc-finger fold; sequence GTEKRIKFRR…CNGTGTIVVD (82 aa). Positions 152, 155, 168, 171, 194, 197, 208, and 211 each coordinate Zn(2+). 4 CXXCXGXG motif repeats span residues 152 to 159, 168 to 175, 194 to 201, and 208 to 215; these read CPDCKGTG, CPTCHGTG, CNTCGGKG, and CPRCNGTG.

It belongs to the DnaJ family. In terms of assembly, homodimer. Requires Zn(2+) as cofactor.

The protein resides in the cytoplasm. Functionally, participates actively in the response to hyperosmotic and heat shock by preventing the aggregation of stress-denatured proteins and by disaggregating proteins, also in an autonomous, DnaK-independent fashion. Unfolded proteins bind initially to DnaJ; upon interaction with the DnaJ-bound protein, DnaK hydrolyzes its bound ATP, resulting in the formation of a stable complex. GrpE releases ADP from DnaK; ATP binding to DnaK triggers the release of the substrate protein, thus completing the reaction cycle. Several rounds of ATP-dependent interactions between DnaJ, DnaK and GrpE are required for fully efficient folding. Also involved, together with DnaK and GrpE, in the DNA replication of plasmids through activation of initiation proteins. The sequence is that of Chaperone protein DnaJ from Thermoplasma volcanium (strain ATCC 51530 / DSM 4299 / JCM 9571 / NBRC 15438 / GSS1).